The chain runs to 1389 residues: DNA-directed RNA polymerase subunit beta' (1389 aa).

Zn(2+)-binding residues include Cys-73, Cys-75, Cys-88, and Cys-91. Asp-464, Asp-466, and Asp-468 together coordinate Mg(2+). Residues Cys-810, Cys-884, Cys-891, and Cys-894 each coordinate Zn(2+).

The protein belongs to the RNA polymerase beta' chain family. The RNAP catalytic core consists of 2 alpha, 1 beta, 1 beta' and 1 omega subunit. When a sigma factor is associated with the core the holoenzyme is formed, which can initiate transcription. Mg(2+) is required as a cofactor. Requires Zn(2+) as cofactor.

The catalysed reaction is RNA(n) + a ribonucleoside 5'-triphosphate = RNA(n+1) + diphosphate. In terms of biological role, DNA-dependent RNA polymerase catalyzes the transcription of DNA into RNA using the four ribonucleoside triphosphates as substrates. In Pelagibacter ubique (strain HTCC1062), this protein is DNA-directed RNA polymerase subunit beta'.